Consider the following 397-residue polypeptide: 1-deoxy-D-xylulose 5-phosphate reductoisomerase (397 aa).

NADPH is bound by residues threonine 12, glycine 13, serine 14, isoleucine 15, glycine 38, lysine 39, asparagine 40, and asparagine 126. Lysine 127 contributes to the 1-deoxy-D-xylulose 5-phosphate binding site. Glutamate 128 contacts NADPH. Position 152 (aspartate 152) interacts with Mn(2+). Positions 153, 154, 188, and 211 each coordinate 1-deoxy-D-xylulose 5-phosphate. Residue glutamate 154 participates in Mn(2+) binding. An NADPH-binding site is contributed by glycine 217. Positions 224, 229, 230, and 233 each coordinate 1-deoxy-D-xylulose 5-phosphate. Residue glutamate 233 participates in Mn(2+) binding.

It belongs to the DXR family. Requires Mg(2+) as cofactor. The cofactor is Mn(2+).

The enzyme catalyses 2-C-methyl-D-erythritol 4-phosphate + NADP(+) = 1-deoxy-D-xylulose 5-phosphate + NADPH + H(+). It participates in isoprenoid biosynthesis; isopentenyl diphosphate biosynthesis via DXP pathway; isopentenyl diphosphate from 1-deoxy-D-xylulose 5-phosphate: step 1/6. Its function is as follows. Catalyzes the NADPH-dependent rearrangement and reduction of 1-deoxy-D-xylulose-5-phosphate (DXP) to 2-C-methyl-D-erythritol 4-phosphate (MEP). The polypeptide is 1-deoxy-D-xylulose 5-phosphate reductoisomerase (Haemophilus influenzae (strain ATCC 51907 / DSM 11121 / KW20 / Rd)).